The primary structure comprises 497 residues: MGLEALVPLAVIVAIFLLLVDLMHRRQRWAARYPPGPLPLPGLGNLLHVDFQNTPYCFDQLRRRFGDVFSLQLAWTPVVVLNGLAAVREALVTHGEDTADRPPVPITQILGFGPRSQGVFLARYGPAWREQRRFSVSTLRNLGLGKKSLEQWVTEEAACLCAAFANHSGRPFRPNGLLDKAVSNVIASLTCGRRFEYDDPRFLRLLDLAQEGLKEESGFLREVLNAVPVLLHIPALAGKVLRFQKAFLTQLDELLTEHRMTWDPAQPPRDLTEAFLAEMEKAKGNPESSFNDENLRIVVADLFSAGMVTTSTTLAWGLLLMILHPDVQRRVQQEIDDVIGQVRRPEMGDQAHMPYTTAVIHEVQRFGDIVPLGVTHMTSRDIEVQGFRIPKGTTLITNLSSVLKDEAVWEKPFRFHPEHFLDAQGHFVKPEAFLPFSAGRRACLGEPLARMELFLFFTSLLQHFSFSVPTGQPRPSHHGVFAFLVSPSPYELCAVPR.

Asp301 contacts substrate. Heme is bound at residue Cys443.

Belongs to the cytochrome P450 family. Heme is required as a cofactor.

Its subcellular location is the endoplasmic reticulum membrane. It localises to the microsome membrane. It carries out the reaction (5Z,8Z,11Z,14Z)-eicosatetraenoate + reduced [NADPH--hemoprotein reductase] + O2 = (8R,9S)-epoxy-(5Z,11Z,14Z)-eicosatrienoate + oxidized [NADPH--hemoprotein reductase] + H2O + H(+). It catalyses the reaction (5Z,8Z,11Z,14Z)-eicosatetraenoate + reduced [NADPH--hemoprotein reductase] + O2 = (11R,12S)-epoxy-(5Z,8Z,14Z)-eicosatrienoate + oxidized [NADPH--hemoprotein reductase] + H2O + H(+). The enzyme catalyses (5Z,8Z,11Z,14Z)-eicosatetraenoate + reduced [NADPH--hemoprotein reductase] + O2 = (14S,15R)-epoxy-(5Z,8Z,11Z)-eicosatrienoate + oxidized [NADPH--hemoprotein reductase] + H2O + H(+). The catalysed reaction is N-(5Z,8Z,11Z,14Z-eicosatetraenoyl)-ethanolamine + reduced [NADPH--hemoprotein reductase] + O2 = N-(8,9-epoxy-5Z,11Z,14Z-eicosatrienoyl)-ethanolamine + oxidized [NADPH--hemoprotein reductase] + H2O + H(+). It carries out the reaction N-(5Z,8Z,11Z,14Z-eicosatetraenoyl)-ethanolamine + reduced [NADPH--hemoprotein reductase] + O2 = N-(11,12-epoxy-5Z,8Z,14Z-eicosatrienoyl)-ethanolamine + oxidized [NADPH--hemoprotein reductase] + H2O + H(+). It catalyses the reaction N-(5Z,8Z,11Z,14Z-eicosatetraenoyl)-ethanolamine + reduced [NADPH--hemoprotein reductase] + O2 = N-(14,15-epoxy-5Z,8Z,11Z-eicosatrienoyl)-ethanolamine + oxidized [NADPH--hemoprotein reductase] + H2O + H(+). The enzyme catalyses N-(5Z,8Z,11Z,14Z-eicosatetraenoyl)-ethanolamine + reduced [NADPH--hemoprotein reductase] + O2 = N-(20-hydroxy-5Z,8Z,11Z,14Z-eicosatetraenoyl)-ethanolamine + oxidized [NADPH--hemoprotein reductase] + H2O + H(+). The catalysed reaction is (5Z,8Z,11Z,14Z,17Z)-eicosapentaenoate + reduced [NADPH--hemoprotein reductase] + O2 = (17S,18R)-epoxy-(5Z,8Z,11Z,14Z)-eicosatetraenoate + oxidized [NADPH--hemoprotein reductase] + H2O + H(+). It carries out the reaction (4Z,7Z,10Z,13Z,16Z,19Z)-docosahexaenoate + reduced [NADPH--hemoprotein reductase] + O2 = (19R,20S)-epoxy-(4Z,7Z,10Z,13Z,16Z)-docosapentaenoate + oxidized [NADPH--hemoprotein reductase] + H2O + H(+). It catalyses the reaction (4Z,7Z,10Z,13Z,16Z,19Z)-docosahexaenoate + reduced [NADPH--hemoprotein reductase] + O2 = (19S,20R)-epoxy-(4Z,7Z,10Z,13Z,16Z)-docosapentaenoate + oxidized [NADPH--hemoprotein reductase] + H2O + H(+). The enzyme catalyses cholesterol + reduced [NADPH--hemoprotein reductase] + O2 = 25-hydroxycholesterol + oxidized [NADPH--hemoprotein reductase] + H2O + H(+). The catalysed reaction is all-trans-retinol + reduced [NADPH--hemoprotein reductase] + O2 = all-trans-retinal + oxidized [NADPH--hemoprotein reductase] + 2 H2O + H(+). Its pathway is cofactor metabolism; retinol metabolism. The protein operates within lipid metabolism; fatty acid metabolism. It participates in steroid metabolism; cholesterol metabolism. A cytochrome P450 monooxygenase involved in the metabolism of fatty acids, steroids and retinoids. Mechanistically, uses molecular oxygen inserting one oxygen atom into a substrate, and reducing the second into a water molecule, with two electrons provided by NADPH via cytochrome P450 reductase (NADPH--hemoprotein reductase). Catalyzes the epoxidation of double bonds of polyunsaturated fatty acids (PUFA). Metabolizes endocannabinoid arachidonoylethanolamide (anandamide) to 20-hydroxyeicosatetraenoic acid ethanolamide (20-HETE-EA) and 8,9-, 11,12-, and 14,15-epoxyeicosatrienoic acid ethanolamides (EpETrE-EAs), potentially modulating endocannabinoid system signaling. Catalyzes the hydroxylation of carbon-hydrogen bonds. Metabolizes cholesterol toward 25-hydroxycholesterol, a physiological regulator of cellular cholesterol homeostasis. Catalyzes the oxidative transformations of all-trans retinol to all-trans retinal, a precursor for the active form all-trans-retinoic acid. Also involved in the oxidative metabolism of drugs such as antiarrhythmics, adrenoceptor antagonists, and tricyclic antidepressants. This is Cytochrome P450 2D6 from Homo sapiens (Human).